Reading from the N-terminus, the 84-residue chain is Putative membrane protein insertion efficiency factor (84 aa).

This sequence belongs to the UPF0161 family.

It localises to the cell inner membrane. Could be involved in insertion of integral membrane proteins into the membrane. This chain is Putative membrane protein insertion efficiency factor, found in Shewanella baltica (strain OS195).